The sequence spans 876 residues: Valine--tRNA ligase (876 aa).

Positions 43 to 53 match the 'HIGH' region motif; it reads PNVTGVLHMGH. The 'KMSKS' region motif lies at 532–536; the sequence is KMSKS. Residue lysine 535 coordinates ATP. Coiled coils occupy residues 805 to 826 and 853 to 875; these read GNMI…HKEG and RKKQ…SLKN.

This sequence belongs to the class-I aminoacyl-tRNA synthetase family. ValS type 1 subfamily. In terms of assembly, monomer.

Its subcellular location is the cytoplasm. The enzyme catalyses tRNA(Val) + L-valine + ATP = L-valyl-tRNA(Val) + AMP + diphosphate. Functionally, catalyzes the attachment of valine to tRNA(Val). As ValRS can inadvertently accommodate and process structurally similar amino acids such as threonine, to avoid such errors, it has a 'posttransfer' editing activity that hydrolyzes mischarged Thr-tRNA(Val) in a tRNA-dependent manner. The polypeptide is Valine--tRNA ligase (Bacteroides fragilis (strain ATCC 25285 / DSM 2151 / CCUG 4856 / JCM 11019 / LMG 10263 / NCTC 9343 / Onslow / VPI 2553 / EN-2)).